Consider the following 768-residue polypeptide: Levansucrase (768 aa).

The N-terminal stretch at 1-36 (MLENKKHKKMSLSGKSLLMGTLSTAAIVLSASTVNA) is a signal peptide. Polar residues-rich tracts occupy residues 57 to 68 (SASVNKNDNSGL), 80 to 99 (TETN…SQVN), 106 to 134 (SSTQ…QDSD), and 143 to 153 (NNSQGQSSTSS). Residues 57-158 (SASVNKNDNS…SSTSSEKTEL (102 aa)) are disordered. The sucrose site is built by tryptophan 250, aspartate 251, and serine 320. The active-site Nucleophile is aspartate 251. Aspartate 398 contacts Ca(2+). Sucrose-binding residues include arginine 403 and aspartate 404. Ca(2+) contacts are provided by glutamine 429, asparagine 468, and aspartate 502. Glutamate 503 contacts sucrose. The Proton donor/acceptor role is filled by glutamate 505. Sucrose is bound at residue arginine 523. The interval 688–736 (HQPVTPNVPTTPEKPENPTTPNTPDTPRTPEVPTTPVKKTTQSELPKAG) is disordered. Residues 691–727 (VTPNVPTTPEKPENPTTPNTPDTPRTPEVPTTPVKKT) show a composition bias toward low complexity. An LPXTG sorting signal motif is present at residues 732 to 736 (LPKAG). Residue alanine 735 is modified to Pentaglycyl murein peptidoglycan amidated alanine. A propeptide spans 736 to 768 (GAKDGIAATILGAISSMLGVIGLAGISKRKRNN) (removed by sortase).

The protein belongs to the glycosyl hydrolase 68 family.

Its subcellular location is the secreted. It is found in the cell wall. It localises to the cell surface. The enzyme catalyses [6)-beta-D-fructofuranosyl-(2-&gt;](n) alpha-D-glucopyranoside + sucrose = [6)-beta-D-fructofuranosyl-(2-&gt;](n+1) alpha-D-glucopyranoside + D-glucose. Its activity is regulated as follows. Calcium ions are required for optimal activity, but do not seem to be essential since addition of EDTA causes only a 48% drop in activity. Ca(2+) may play an important structural role and promote stability of levansucrase. In terms of biological role, fructosyltransferase that catalyzes the polymerization of the fructose moiety of sucrose to produce levan polymer and the fructo-oligosaccharide (FOS) 1-kestose. Is also able to convert raffinose into a fructan polymer and a single oligosaccharide (most likely Gal-Glc-Frc-Frc) in vitro; however, L.gasseri strain DSM 20077 is unable to ferment raffinose. Also displays sucrose hydrolase activity. The polypeptide is Levansucrase (Lactobacillus gasseri).